A 187-amino-acid chain; its full sequence is UPF0301 protein YqgE (187 aa).

The protein belongs to the UPF0301 (AlgH) family.

The protein is UPF0301 protein YqgE of Salmonella paratyphi B (strain ATCC BAA-1250 / SPB7).